A 101-amino-acid polypeptide reads, in one-letter code: Protein translation factor SUI1 homolog (101 aa).

This sequence belongs to the SUI1 family.

The polypeptide is Protein translation factor SUI1 homolog (Aeropyrum pernix (strain ATCC 700893 / DSM 11879 / JCM 9820 / NBRC 100138 / K1)).